A 396-amino-acid chain; its full sequence is 4-hydroxy-3-methylbut-2-en-1-yl diphosphate synthase (ferredoxin) (396 aa).

Cys-305, Cys-308, Cys-339, and Glu-346 together coordinate [4Fe-4S] cluster.

The protein belongs to the IspG family. The cofactor is [4Fe-4S] cluster.

The enzyme catalyses (2E)-4-hydroxy-3-methylbut-2-enyl diphosphate + 2 oxidized [2Fe-2S]-[ferredoxin] + H2O = 2-C-methyl-D-erythritol 2,4-cyclic diphosphate + 2 reduced [2Fe-2S]-[ferredoxin] + H(+). It functions in the pathway isoprenoid biosynthesis; isopentenyl diphosphate biosynthesis via DXP pathway; isopentenyl diphosphate from 1-deoxy-D-xylulose 5-phosphate: step 5/6. In terms of biological role, converts 2C-methyl-D-erythritol 2,4-cyclodiphosphate (ME-2,4cPP) into 1-hydroxy-2-methyl-2-(E)-butenyl 4-diphosphate. The protein is 4-hydroxy-3-methylbut-2-en-1-yl diphosphate synthase (ferredoxin) of Gloeobacter violaceus (strain ATCC 29082 / PCC 7421).